Consider the following 151-residue polypeptide: MKIQRHSKILEIINTKDVETQEELAEELKKRGVDVTQATVSRDIKELKLIKVLSENGRYKYATIAKSDGLLANKLVNVFSNTVISVENVQNFVVVKTLSGSGSAAAESIDSMNFDGIAGTIAGDNTIFILTINENKAEEIVKKLKKMLENK.

It belongs to the ArgR family.

The protein resides in the cytoplasm. Its pathway is amino-acid biosynthesis; L-arginine biosynthesis [regulation]. Functionally, regulates arginine biosynthesis genes. The chain is Arginine repressor from Clostridium novyi (strain NT).